A 69-amino-acid chain; its full sequence is Protein SlyX homolog (69 aa).

It belongs to the SlyX family.

The protein is Protein SlyX homolog of Pseudomonas aeruginosa (strain LESB58).